The sequence spans 274 residues: NH(3)-dependent NAD(+) synthetase (274 aa).

46–53 provides a ligand contact to ATP; sequence GISGGQDS. Aspartate 52 contributes to the Mg(2+) binding site. Arginine 140 serves as a coordination point for deamido-NAD(+). Position 160 (threonine 160) interacts with ATP. Glutamate 165 serves as a coordination point for Mg(2+). Lysine 173 and aspartate 180 together coordinate deamido-NAD(+). ATP-binding residues include lysine 189 and threonine 211. Residue 260–261 participates in deamido-NAD(+) binding; it reads HK.

Belongs to the NAD synthetase family. Homodimer.

It catalyses the reaction deamido-NAD(+) + NH4(+) + ATP = AMP + diphosphate + NAD(+) + H(+). It functions in the pathway cofactor biosynthesis; NAD(+) biosynthesis; NAD(+) from deamido-NAD(+) (ammonia route): step 1/1. In terms of biological role, catalyzes the ATP-dependent amidation of deamido-NAD to form NAD. Uses ammonia as a nitrogen source. This is NH(3)-dependent NAD(+) synthetase from Lactococcus lactis subsp. lactis (strain IL1403) (Streptococcus lactis).